Consider the following 476-residue polypeptide: UDP-glucose 6-dehydrogenase (476 aa).

NAD(+) is bound by residues 7-12 (GAGYVG), aspartate 32, arginine 37, 85-89 (VNTPT), 126-127 (ST), and glutamate 161. Substrate-binding positions include 157–161 (EFLAE), 216–220 (KLAAN), arginine 256, and 263–269 (QASVGFG). The active-site Nucleophile is cysteine 272. Position 272-275 (272-275 (CFQK)) interacts with NAD(+). 334–335 (FK) contributes to the substrate binding site. Arginine 342 serves as a coordination point for NAD(+). Arginine 439 contacts substrate.

Belongs to the UDP-glucose/GDP-mannose dehydrogenase family.

The catalysed reaction is UDP-alpha-D-glucose + 2 NAD(+) + H2O = UDP-alpha-D-glucuronate + 2 NADH + 3 H(+). It functions in the pathway nucleotide-sugar biosynthesis; UDP-alpha-D-glucuronate biosynthesis; UDP-alpha-D-glucuronate from UDP-alpha-D-glucose: step 1/1. Functionally, involved in the biosynthesis of glycosaminoglycans; hyaluronan, chondroitin sulfate and heparan sulfate. Required for wingless signaling in different tissues. This chain is UDP-glucose 6-dehydrogenase (sgl), found in Drosophila melanogaster (Fruit fly).